A 35-amino-acid polypeptide reads, in one-letter code: Small toxic polypeptide LdrD (35 aa).

Residues 10-32 (FWHDLAAPVIAGILASMIVNWLN) traverse the membrane as a helical segment.

It belongs to the Ldr toxic peptide family.

The protein resides in the cell inner membrane. In terms of biological role, toxic component of a type I toxin-antitoxin (TA) system. Overexpression causes rapid cell killing and nucleoid condensation of the host cell. Overexpression induces stress-response and a number of membrane protein genes. May inhibit ATP synthesis due to its insertion in the cell inner membrane. This Escherichia coli (strain K12) protein is Small toxic polypeptide LdrD (ldrD).